We begin with the raw amino-acid sequence, 147 residues long: Cyanate hydratase (147 aa).

Catalysis depends on residues Arg-88, Glu-91, and Ser-114.

The protein belongs to the cyanase family.

The catalysed reaction is cyanate + hydrogencarbonate + 3 H(+) = NH4(+) + 2 CO2. Catalyzes the reaction of cyanate with bicarbonate to produce ammonia and carbon dioxide. This chain is Cyanate hydratase, found in Thiobacillus denitrificans (strain ATCC 25259 / T1).